Consider the following 139-residue polypeptide: Transcription antitermination protein NusB (139 aa).

Belongs to the NusB family.

In terms of biological role, involved in transcription antitermination. Required for transcription of ribosomal RNA (rRNA) genes. Binds specifically to the boxA antiterminator sequence of the ribosomal RNA (rrn) operons. In Escherichia fergusonii (strain ATCC 35469 / DSM 13698 / CCUG 18766 / IAM 14443 / JCM 21226 / LMG 7866 / NBRC 102419 / NCTC 12128 / CDC 0568-73), this protein is Transcription antitermination protein NusB.